The following is a 936-amino-acid chain: Intimin (936 aa).

The N-terminal stretch at Met-1–Gly-41 is a signal peptide. The region spanning Leu-63–Leu-112 is the LysM domain. Big-1 domains follow at residues Ile-557 to Val-650 and Ile-657 to Phe-748. In terms of domain architecture, BIG2 spans Lys-780–Thr-831. A disulfide bridge links Cys-857 with Cys-934.

Belongs to the intimin/invasin family.

Its subcellular location is the cell outer membrane. An inverse autotransporter. The polypeptide is Intimin (eae) (Citrobacter freundii).